A 198-amino-acid chain; its full sequence is MNTGRGVGRVVVLSGPSAVGKSTVVRCLRERIPDLYFSVSATTRAPRPGEVDGVDYSFVTPEAFQQLIDDGALLEWAEIHGGLHRSGTPARPVREATVAGRPVLIEVDLAGARAVKQAMPEALSVFLAPPSWEVLERRLVGRGTETPDVMSRRLDTARTELAAQSDFDVVVVNSQLESACSELVSLLVGHTSAGTNPA.

A Guanylate kinase-like domain is found at 8-188; sequence GRVVVLSGPS…ACSELVSLLV (181 aa). ATP is bound at residue 15–22; the sequence is GPSAVGKS.

Belongs to the guanylate kinase family.

It is found in the cytoplasm. It carries out the reaction GMP + ATP = GDP + ADP. In terms of biological role, essential for recycling GMP and indirectly, cGMP. The sequence is that of Guanylate kinase from Mycobacterium sp. (strain MCS).